The sequence spans 70 residues: ATP synthase subunit c (70 aa).

Transmembrane regions (helical) follow at residues 4–24 (IAAGIAAGLAAVGAGVGNGLV) and 47–67 (FLGVGLIEALPILSIVIAFLV).

The protein belongs to the ATPase C chain family. F-type ATPases have 2 components, F(1) - the catalytic core - and F(0) - the membrane proton channel. F(1) has five subunits: alpha(3), beta(3), gamma(1), delta(1), epsilon(1). F(0) has three main subunits: a(1), b(2) and c(10-14). The alpha and beta chains form an alternating ring which encloses part of the gamma chain. F(1) is attached to F(0) by a central stalk formed by the gamma and epsilon chains, while a peripheral stalk is formed by the delta and b chains.

It is found in the cell membrane. In terms of biological role, f(1)F(0) ATP synthase produces ATP from ADP in the presence of a proton or sodium gradient. F-type ATPases consist of two structural domains, F(1) containing the extramembraneous catalytic core and F(0) containing the membrane proton channel, linked together by a central stalk and a peripheral stalk. During catalysis, ATP synthesis in the catalytic domain of F(1) is coupled via a rotary mechanism of the central stalk subunits to proton translocation. Functionally, key component of the F(0) channel; it plays a direct role in translocation across the membrane. A homomeric c-ring of between 10-14 subunits forms the central stalk rotor element with the F(1) delta and epsilon subunits. The polypeptide is ATP synthase subunit c (Limosilactobacillus fermentum (strain NBRC 3956 / LMG 18251) (Lactobacillus fermentum)).